Reading from the N-terminus, the 1524-residue chain is DNA polymerase alpha catalytic subunit (1524 aa).

2 disordered regions span residues 1 to 53 (MSGD…QKPI) and 68 to 139 (RRRE…KVNP). A compositionally biased stretch (basic and acidic residues) spans 20–30 (SSRKDTLERLK). Residues 79–96 (EDGEGGDLGYLDEGEEED) are compositionally biased toward acidic residues. Zn(2+) contacts are provided by cysteine 1333, cysteine 1336, cysteine 1375, cysteine 1378, cysteine 1414, cysteine 1419, cysteine 1440, and cysteine 1446. The CysA-type zinc-finger motif lies at 1333–1378 (CPSCSTAFNCPSIISSVCASISKKPATPETEESDSTFWLKLHCPKC). The CysB motif motif lies at 1414–1446 (CEDESCKHTTRSPNFRLLGERERGTVCPNYPNC).

This sequence belongs to the DNA polymerase type-B family.

The protein resides in the nucleus. The catalysed reaction is DNA(n) + a 2'-deoxyribonucleoside 5'-triphosphate = DNA(n+1) + diphosphate. In terms of biological role, polymerase alpha in a complex with DNA primase is a replicative polymerase. In Arabidopsis thaliana (Mouse-ear cress), this protein is DNA polymerase alpha catalytic subunit (POLA).